A 250-amino-acid polypeptide reads, in one-letter code: Triosephosphate isomerase (250 aa).

9–11 (NWK) is a binding site for substrate. The active-site Electrophile is the His-94. The Proton acceptor role is filled by Glu-166. Substrate-binding positions include Gly-172, Ser-212, and 233 to 234 (GG).

The protein belongs to the triosephosphate isomerase family. Homodimer.

It localises to the cytoplasm. It catalyses the reaction D-glyceraldehyde 3-phosphate = dihydroxyacetone phosphate. It participates in carbohydrate biosynthesis; gluconeogenesis. Its pathway is carbohydrate degradation; glycolysis; D-glyceraldehyde 3-phosphate from glycerone phosphate: step 1/1. Involved in the gluconeogenesis. Catalyzes stereospecifically the conversion of dihydroxyacetone phosphate (DHAP) to D-glyceraldehyde-3-phosphate (G3P). The polypeptide is Triosephosphate isomerase (Treponema denticola (strain ATCC 35405 / DSM 14222 / CIP 103919 / JCM 8153 / KCTC 15104)).